A 156-amino-acid chain; its full sequence is MNLNATLFAQMIVFFVLWWVVARFVWPPLVKALDERSSKIADGLAAAERGKEALALASNEAEQELTKARQEGVQRVAEAEKRAQMSADEIRANAQAEAARIITQAKQDADQQVTSAREVLRAEVAVLAVKGAEQILRREVDAKAHGQLLDQLKAEL.

Residues 7 to 27 form a helical membrane-spanning segment; the sequence is LFAQMIVFFVLWWVVARFVWP.

It belongs to the ATPase B chain family. As to quaternary structure, F-type ATPases have 2 components, F(1) - the catalytic core - and F(0) - the membrane proton channel. F(1) has five subunits: alpha(3), beta(3), gamma(1), delta(1), epsilon(1). F(0) has three main subunits: a(1), b(2) and c(10-14). The alpha and beta chains form an alternating ring which encloses part of the gamma chain. F(1) is attached to F(0) by a central stalk formed by the gamma and epsilon chains, while a peripheral stalk is formed by the delta and b chains.

The protein resides in the cell membrane. Its function is as follows. F(1)F(0) ATP synthase produces ATP from ADP in the presence of a proton or sodium gradient. F-type ATPases consist of two structural domains, F(1) containing the extramembraneous catalytic core and F(0) containing the membrane proton channel, linked together by a central stalk and a peripheral stalk. During catalysis, ATP synthesis in the catalytic domain of F(1) is coupled via a rotary mechanism of the central stalk subunits to proton translocation. In terms of biological role, component of the F(0) channel, it forms part of the peripheral stalk, linking F(1) to F(0). In Polynucleobacter asymbioticus (strain DSM 18221 / CIP 109841 / QLW-P1DMWA-1) (Polynucleobacter necessarius subsp. asymbioticus), this protein is ATP synthase subunit b.